The primary structure comprises 245 residues: Homeobox protein Hox-A4a (245 aa).

The segment at 34–99 is disordered; the sequence is DYYERPKDPG…HGPRLTTESC (66 aa). The span at 35–51 shows a compositional bias: basic and acidic residues; sequence YYERPKDPGFPHHEEAS. Composition is skewed to polar residues over residues 53–73 and 82–99; these read PRSN…NDLN and QPQS…TESC. Positions 126 to 131 match the Antp-type hexapeptide motif; sequence VYPWMK. A DNA-binding region (homeobox) is located at residues 147–206; the sequence is PKRSRTAYTRQQALELEKEFHFNRYLTRRRRVEIAHTMCLSERQVKIWFQNRRMKWKKDH. Residues 205-245 are disordered; it reads DHKLPNTKIRSSSSAPSNHHVKTDATQQQQTLLPTPCSSNL. Over residues 212 to 221 the composition is skewed to polar residues; sequence KIRSSSSAPS. The span at 230–245 shows a compositional bias: low complexity; it reads TQQQQTLLPTPCSSNL.

The protein belongs to the Antp homeobox family. Deformed subfamily.

It is found in the nucleus. Sequence-specific transcription factor which is part of a developmental regulatory system that provides cells with specific positional identities on the anterior-posterior axis. This chain is Homeobox protein Hox-A4a (hoxa4a), found in Danio rerio (Zebrafish).